The sequence spans 980 residues: Ovochymase-2 (980 aa).

The first 21 residues, 1–21 (MAETSVFSIMMLTVMTAVGRG), serve as a signal peptide directing secretion. A propeptide spans 22–49 (ATDRPGRVSRCGERPSANASVTYNLLSR) (activation peptide). A glycan (N-linked (GlcNAc...) asparagine) is linked at Asn-39. The Peptidase S1 1 domain occupies 50–299 (IVGGTSAVKG…LLNWLSANLN (250 aa)). An intrachain disulfide couples Cys-75 to Cys-91. His-90 (charge relay system) is an active-site residue. The Ca(2+) site is built by Val-112 and Glu-117. Residue Asp-140 is the Charge relay system of the active site. 11 cysteine pairs are disulfide-bonded: Cys-174–Cys-244, Cys-205–Cys-223, Cys-234–Cys-263, Cys-312–Cys-342, Cys-369–Cys-388, Cys-435–Cys-462, Cys-489–Cys-510, Cys-618–Cys-634, Cys-716–Cys-779, Cys-744–Cys-757, and Cys-769–Cys-798. The active-site Charge relay system is Ser-238. CUB domains are found at residues 312 to 425 (CSTN…YQAV) and 435 to 547 (CGSV…ISFV). Residues 593–822 (IIKAEEAMPN…FIPWIMETIL (230 aa)) form the Peptidase S1 2 domain. Positions 593-980 (IIKAEEAMPN…WLSYSFHNQN (388 aa)) are cleaved as a propeptide — activation peptide. Asn-766 is a glycosylation site (N-linked (GlcNAc...) asparagine). Residues 835–863 (HHPLIPPDKLSQEKALLPDSPPSNDSSSS) are disordered. Asn-858 and Asn-932 each carry an N-linked (GlcNAc...) asparagine glycan.

Belongs to the peptidase S1 family. Post-translationally, the catalytically inactive 108 kDa form is processed both N- and C-terminally to give rise to catalytically active and inactive forms. Differentially expressed in the oviductal pars recta (PR) region.

It localises to the secreted. It catalyses the reaction Preferential cleavage at 371-Gly-Ser-Arg-|-Trp-374 of glycoprotein gp43 in Xenopus laevis coelemic egg envelope to yield gp41.. Mediates gamete interaction by affecting the vitelline coat. The chain is Ovochymase-2 (OVCH2) from Rhinella arenarum (Argentine common toad).